Reading from the N-terminus, the 535-residue chain is Dual specificity calcium/calmodulin-dependent 3',5'-cyclic nucleotide phosphodiesterase 1B (535 aa).

The tract at residues 1 to 21 is disordered; it reads MELSPRSPPEMLESDCPSPLE. 2 positions are modified to phosphoserine: serine 7 and serine 14. Calmodulin-binding stretches follow at residues 27-47 and 117-140; these read SKKM…QLEN and EKPK…MFRR. The 358-residue stretch at 145–502 folds into the PDEase domain; that stretch reads VGPTYSTAVH…QKWKERAASG (358 aa). Histidine 222 functions as the Proton donor in the catalytic mechanism. 4 residues coordinate Zn(2+): histidine 226, histidine 262, aspartate 263, and aspartate 369. Position 263 (aspartate 263) interacts with Mg(2+). Disordered regions lie at residues 445-474 and 495-535; these read PLTD…GDPN and WKER…GNLD. Residues 454 to 463 are compositionally biased toward polar residues; sequence KSQPSFQWRQ. A phosphoserine mark is found at serine 465 and serine 513.

The protein belongs to the cyclic nucleotide phosphodiesterase family. PDE1 subfamily. As to quaternary structure, homodimer. Zn(2+) is required as a cofactor. Mg(2+) serves as cofactor. In terms of tissue distribution, expressed in brain.

The protein resides in the cytoplasm. It localises to the cytosol. The enzyme catalyses a nucleoside 3',5'-cyclic phosphate + H2O = a nucleoside 5'-phosphate + H(+). The catalysed reaction is 3',5'-cyclic GMP + H2O = GMP + H(+). It carries out the reaction 3',5'-cyclic AMP + H2O = AMP + H(+). Type I PDE are activated by the binding of calmodulin in the presence of Ca(2+). In terms of biological role, cyclic nucleotide phosphodiesterase with a dual specificity for the second messengers cAMP and cGMP, which are key regulators of many important physiological processes. Has a preference for cGMP as a substrate. In Rattus norvegicus (Rat), this protein is Dual specificity calcium/calmodulin-dependent 3',5'-cyclic nucleotide phosphodiesterase 1B.